Reading from the N-terminus, the 418-residue chain is AP-3 complex subunit mu-2 (418 aa).

Positions 176–417 (NNEAYFDVVE…MTKAGKFQVR (242 aa)) constitute an MHD domain.

Belongs to the adaptor complexes medium subunit family. Adaptor protein complex 3 (AP-3) is a heterotetramer composed of two large adaptins (delta-type subunit AP3D1 and beta-type subunit AP3B1 or AP3B2), a medium adaptin (mu-type subunit AP3M1 or AP3M2) and a small adaptin (sigma-type subunit APS1 or AP3S2). AP-3 associates with the BLOC-1 complex.

It is found in the golgi apparatus. Its subcellular location is the cytoplasmic vesicle membrane. Functionally, component of the adaptor complexes which link clathrin to receptors in coated vesicles. Clathrin-associated protein complexes are believed to interact with the cytoplasmic tails of membrane proteins, leading to their selection and concentration. Ap47 is a subunit of the plasma membrane adaptor. In concert with the BLOC-1 complex, AP-3 is required to target cargos into vesicles assembled at cell bodies for delivery into neurites and nerve terminals. In Rattus norvegicus (Rat), this protein is AP-3 complex subunit mu-2 (Ap3m2).